The following is a 121-amino-acid chain: MFIKKDRKLARQRKHLRVRRRLMGTPERPRLSVYRSLRHIYAQVIDDTRGVTLVAASTLDPALKGLESTGNITAARKVGELIARKALAKGINKVVFDRGGNIYHGRIAAVAEGAREAGLNF.

It belongs to the universal ribosomal protein uL18 family. As to quaternary structure, part of the 50S ribosomal subunit; part of the 5S rRNA/L5/L18/L25 subcomplex. Contacts the 5S and 23S rRNAs.

Its function is as follows. This is one of the proteins that bind and probably mediate the attachment of the 5S RNA into the large ribosomal subunit, where it forms part of the central protuberance. The chain is Large ribosomal subunit protein uL18 from Moorella thermoacetica (strain ATCC 39073 / JCM 9320).